The sequence spans 144 residues: Small ribosomal subunit protein uS19 (144 aa).

It belongs to the universal ribosomal protein uS19 family.

In terms of biological role, protein S19 forms a complex with S13 that binds strongly to the 16S ribosomal RNA. The chain is Small ribosomal subunit protein uS19 from Hyperthermus butylicus (strain DSM 5456 / JCM 9403 / PLM1-5).